The primary structure comprises 503 residues: 12-dehydrotetracycline 5-monooxygenase/anhydrotetracycline 6-monooxygenase (503 aa).

FAD-binding positions include threonine 13, 32–33 (ER), leucine 44, glutamine 99, valine 123, threonine 160, aspartate 288, and 301–302 (LN).

This sequence belongs to the PheA/TfdB FAD monooxygenase family. As to quaternary structure, monomer. The cofactor is FAD.

It carries out the reaction 5a,11a-dehydrotetracycline + NADPH + O2 + H(+) = 5a,11a-dehydrooxytetracycline + NADP(+) + H2O. It catalyses the reaction anhydrotetracycline + NADPH + O2 + H(+) = 5a,11a-dehydrotetracycline + NADP(+) + H2O. It functions in the pathway antibiotic biosynthesis; oxytetracycline biosynthesis. Its function is as follows. Involved in the biosynthesis of the antibiotics oxytetracycline and tetracycline. OxyS starts by catalyzing the stereospecific hydroxylation of anhydrotetracycline at C(6) position to yield 5a,11a-dehydrotetracycline (12-dehydrotetracycline). If the released product is captured by OxyR, it is reduced to tetracycline. However, if the released product is recaptured by OxyS, it performs an additional hydroxylation at C(5), producing 5a,11a-dehydrooxytetracycline, which, following the action of OxyR becomes oxytetracycline. This Streptomyces rimosus subsp. rimosus (strain ATCC 10970 / DSM 40260 / JCM 4667 / NRRL 2234) protein is 12-dehydrotetracycline 5-monooxygenase/anhydrotetracycline 6-monooxygenase.